The following is a 170-amino-acid chain: Acireductone dioxygenase (170 aa).

Positions 99, 101, 105, and 144 each coordinate Fe(2+). His99, His101, Glu105, and His144 together coordinate Ni(2+).

It belongs to the acireductone dioxygenase (ARD) family. As to quaternary structure, monomer. Fe(2+) is required as a cofactor. The cofactor is Ni(2+).

It catalyses the reaction 1,2-dihydroxy-5-(methylsulfanyl)pent-1-en-3-one + O2 = 3-(methylsulfanyl)propanoate + CO + formate + 2 H(+). The enzyme catalyses 1,2-dihydroxy-5-(methylsulfanyl)pent-1-en-3-one + O2 = 4-methylsulfanyl-2-oxobutanoate + formate + 2 H(+). It participates in amino-acid biosynthesis; L-methionine biosynthesis via salvage pathway; L-methionine from S-methyl-5-thio-alpha-D-ribose 1-phosphate: step 5/6. Functionally, catalyzes 2 different reactions between oxygen and the acireductone 1,2-dihydroxy-3-keto-5-methylthiopentene (DHK-MTPene) depending upon the metal bound in the active site. Fe-containing acireductone dioxygenase (Fe-ARD) produces formate and 2-keto-4-methylthiobutyrate (KMTB), the alpha-ketoacid precursor of methionine in the methionine recycle pathway. Ni-containing acireductone dioxygenase (Ni-ARD) produces methylthiopropionate, carbon monoxide and formate, and does not lie on the methionine recycle pathway. The sequence is that of Acireductone dioxygenase from Bacillus thuringiensis subsp. konkukian (strain 97-27).